Reading from the N-terminus, the 116-residue chain is MAGRSGDNDEGLLRACRIIRLLYQSNPYPEPAGTRQAQRNRRRRWRARQRQIHSIGERVLATCLGGPAEPVPLQLPPLERLTLDCSEDCGTSGEKGVGSPQTSGESPAVLGTGAKE.

Position 5 is a phosphoserine; by host CK2 (Ser-5). Residues 18 to 26 (IIRLLYQSN) are homomultimerization. Positions 27–49 (PYPEPAGTRQAQRNRRRRWRARQ) are disordered. A Nuclear localization signal and RNA-binding (RRE) motif is present at residues 34 to 50 (TRQAQRNRRRRWRARQR). Basic residues predominate over residues 38 to 49 (QRNRRRRWRARQ). The short motif at 73–84 (LQLPPLERLTLD) is the Nuclear export signal and binding to XPO1 element. A disordered region spans residues 86–116 (SEDCGTSGEKGVGSPQTSGESPAVLGTGAKE). Residues Ser-92 and Ser-99 each carry the phosphoserine; by host modification.

It belongs to the HIV-1 REV protein family. Homomultimer; when bound to the RRE. Multimeric assembly is essential for activity and may involve XPO1. Binds to human KPNB1, XPO1, TNPO1, RANBP5 and IPO7. Interacts with the viral Integrase. Interacts with human KHDRBS1. Interacts with human NAP1; this interaction decreases Rev multimerization and stimulates its activity. Interacts with human DEAD-box helicases DDX3 and DDX24; these interactions may serve for viral RNA export to the cytoplasm and packaging, respectively. Interacts with human PSIP1; this interaction may inhibit HIV-1 DNA integration by promoting dissociation of the Integrase-LEDGF/p75 complex. Post-translationally, asymmetrically arginine dimethylated at one site by host PRMT6. Methylation impairs the RNA-binding activity and export of viral RNA from the nucleus to the cytoplasm. In terms of processing, phosphorylated by protein kinase CK2. Presence of, and maybe binding to the N-terminus of the regulatory beta subunit of CK2 is necessary for CK2-mediated Rev's phosphorylation.

The protein resides in the host nucleus. The protein localises to the host nucleolus. Its subcellular location is the host cytoplasm. Its function is as follows. Escorts unspliced or incompletely spliced viral pre-mRNAs (late transcripts) out of the nucleus of infected cells. These pre-mRNAs carry a recognition sequence called Rev responsive element (RRE) located in the env gene, that is not present in fully spliced viral mRNAs (early transcripts). This function is essential since most viral proteins are translated from unspliced or partially spliced pre-mRNAs which cannot exit the nucleus by the pathway used by fully processed cellular mRNAs. Rev itself is translated from a fully spliced mRNA that readily exits the nucleus. Rev's nuclear localization signal (NLS) binds directly to KPNB1/Importin beta-1 without previous binding to KPNA1/Importin alpha-1. KPNB1 binds to the GDP bound form of RAN (Ran-GDP) and targets Rev to the nucleus. In the nucleus, the conversion from Ran-GDP to Ran-GTP dissociates Rev from KPNB1 and allows Rev's binding to the RRE in viral pre-mRNAs. Rev multimerization on the RRE via cooperative assembly exposes its nuclear export signal (NES) to the surface. Rev can then form a complex with XPO1/CRM1 and Ran-GTP, leading to nuclear export of the complex. Conversion from Ran-GTP to Ran-GDP mediates dissociation of the Rev/RRE/XPO1/RAN complex, so that Rev can return to the nucleus for a subsequent round of export. Beside KPNB1, also seems to interact with TNPO1/Transportin-1, RANBP5/IPO5 and IPO7/RANBP7 for nuclear import. The nucleoporin-like HRB/RIP is an essential cofactor that probably indirectly interacts with Rev to release HIV RNAs from the perinuclear region to the cytoplasm. The sequence is that of Protein Rev from Human immunodeficiency virus type 1 group M subtype H (isolate VI991) (HIV-1).